The sequence spans 294 residues: MIKKIFALPVIEQISPVLSRRKLDELDLIVVDHPQVKASFALQGAHLLSWKPAGEEEVLWLSNNTPFKNGVAIRGGVPVCWPWFGPAAQQGLPAHGFARNLPWTLKSHHEDADGVALTFELTQSEETKKFWPHDFTLLAHFRVGKTCEIDLESHGEFETTSALHTYFNVGDIAKVSVSGLGDRFIDKVNDAKENVLTDGIQTFPDRTDRVYLNPQDCSVINDEALNRIIAVGHQHHLNVVGWNPGPALSISMGDMPDDGYKTFVCVETAYASETQKVTKEKPAHLAQSIRVAKR.

Residues Arg74 and Arg99 each coordinate substrate. His164 is a catalytic residue. Asp208 lines the substrate pocket. The active site involves Glu267.

This sequence belongs to the glucose-6-phosphate 1-epimerase family. Monomer in solution.

The enzyme catalyses alpha-D-glucose 6-phosphate = beta-D-glucose 6-phosphate. In Escherichia coli (strain K12), this protein is Putative glucose-6-phosphate 1-epimerase (yeaD).